The following is a 1922-amino-acid chain: Endoribonuclease Dicer (1922 aa).

Residues 51 to 227 (LLEAALDHNT…ELEEKIQKLE (177 aa)) form the Helicase ATP-binding domain. Residue 64-71 (LNTGSGKT) participates in ATP binding. Residues 175-178 (DECH) carry the DECH box motif. Residues 256 to 595 (DCGPFTDRSG…LRNKCSKSVD (340 aa)) are required for interaction with PRKRA and TARBP2. Positions 409 to 433 (YVSWSDSEDDDEDEEIEEKEKPETN) are disordered. 2 positions are modified to phosphoserine: S413 and S415. Positions 414-425 (DSEDDDEDEEIE) are enriched in acidic residues. Residues 433–602 (NFPSPFTNIL…SVDTGETDID (170 aa)) form the Helicase C-terminal domain. Residues 630–722 (AIGHINRYCA…MPVGKETVKY (93 aa)) enclose the Dicer dsRNA-binding fold domain. Residues 895 to 1042 (KFMEDIEKSE…LVPELCAIHP (148 aa)) form the PAZ domain. A phosphoserine mark is found at S1016 and S1160. Residues 1276 to 1403 (DSEQSPSIGY…TDKWEKDEMT (128 aa)) enclose the RNase III 1 domain. E1316, D1395, and E1398 together coordinate Mg(2+). 3 positions are modified to phosphoserine: S1460, S1468, and S1470. In terms of domain architecture, RNase III 2 spans 1666–1824 (FENFEKKINY…LAGAIYMDSG (159 aa)). Residues E1705, D1810, and E1813 each coordinate Mg(2+). The DRBM domain maps to 1849 to 1914 (VPRSPVRELL…ARRALRSLKA (66 aa)). S1868 carries the phosphoserine modification.

This sequence belongs to the helicase family. Dicer subfamily. Component of the RISC loading complex (RLC), or micro-RNA (miRNA) loading complex (miRLC), which is composed of DICER1, AGO2 and TARBP2; DICER1 and TARBP2 are required to process precursor miRNAs (pre-miRNAs) to mature miRNAs and then load them onto AGO2. Note that the trimeric RLC/miRLC is also referred to as RISC. Interacts with DHX9, AGO1, PIWIL1 and PRKRA. Associates with the 60S ribosome. Interacts with BCDIN3D. Interacts with AGO2, TARBP2, EIF6, MOV10 and RPL7A (60S ribosome subunit); they form a large RNA-induced silencing complex (RISC). Interacts (via Dicer dsRNA-binding fold domain) with ALOX5 (via PLAT domain); this interaction enhances arachidonate 5-lipoxygenase activity and modifies the miRNA precursor processing activity of DICER1. As to quaternary structure, (Microbial infection) Interacts with ebolavirus transcriptional activator VP30; this interaction prevents TARBP2/TRBP binding to DICER1 and thus allows the virus to counteract host RNA silencing. In terms of assembly, (Microbial infection) Interacts with ebolavirus transcriptional activator VP35; this interaction prevents TARBP2/TRBP binding to DICER1 and thus allows the virus to counteract host RNA silencing. It depends on Mg(2+) as a cofactor. The cofactor is Mn(2+).

The protein resides in the cytoplasm. It is found in the perinuclear region. The enzyme catalyses Endonucleolytic cleavage to 5'-phosphomonoester.. Its function is as follows. Double-stranded RNA (dsRNA) endoribonuclease playing a central role in short dsRNA-mediated post-transcriptional gene silencing. Cleaves naturally occurring long dsRNAs and short hairpin pre-microRNAs (miRNA) into fragments of twenty-one to twenty-three nucleotides with 3' overhang of two nucleotides, producing respectively short interfering RNAs (siRNA) and mature microRNAs. SiRNAs and miRNAs serve as guide to direct the RNA-induced silencing complex (RISC) to complementary RNAs to degrade them or prevent their translation. Gene silencing mediated by siRNAs, also called RNA interference, controls the elimination of transcripts from mobile and repetitive DNA elements of the genome but also the degradation of exogenous RNA of viral origin for instance. The miRNA pathway on the other side is a mean to specifically regulate the expression of target genes. The sequence is that of Endoribonuclease Dicer (DICER1) from Homo sapiens (Human).